We begin with the raw amino-acid sequence, 359 residues long: Protein RecA (359 aa).

Residue 77 to 84 (GPESSGKT) coordinates ATP.

The protein belongs to the RecA family.

Its subcellular location is the cytoplasm. In terms of biological role, can catalyze the hydrolysis of ATP in the presence of single-stranded DNA, the ATP-dependent uptake of single-stranded DNA by duplex DNA, and the ATP-dependent hybridization of homologous single-stranded DNAs. It interacts with LexA causing its activation and leading to its autocatalytic cleavage. This Paramagnetospirillum magneticum (strain ATCC 700264 / AMB-1) (Magnetospirillum magneticum) protein is Protein RecA.